The sequence spans 291 residues: Lectin (291 aa).

Residues 1-28 (MGISKKSQLVPLLAFITMFLMVVSRVSS) form the signal peptide. Asp-118 lines the Ca(2+) pocket. A carbohydrate is bound at residue Arg-138. A propeptide spans 147–162 (NIIKNSTNLDFNAAYN) (removed in mature form). Glu-170 and Asp-172 together coordinate Mn(2+). Positions 172, 174, 176, and 181 each coordinate Ca(2+). Tyr-174 is a binding site for a carbohydrate. The Mn(2+) site is built by Asp-181 and His-186. Lys-208 provides a ligand contact to Ca(2+). Ser-228 lines the a carbohydrate pocket. Positions 281 to 291 (QLQDLRIASVV) are cleaved as a propeptide — removed in mature form.

Belongs to the leguminous lectin family. The mature chain consists of residues 163-280 followed by residues 29-147. Concanavalin A-like lectins of the Diocleinae subtribe undergo proteolytic processing referred to as circular permutation. The propeptide is split into an N-terminal and a C-terminal part, the gamma and beta chain, respectively. These are then religated in beta-gamma order to form the mature alpha chain. The beta and gamma chains can often be detected in cell extracts.

D-mannose-binding lectin that also binds alpha-methyl-D-mannoside with even higher affinity. Has hemagglutinating activity against rabbit erythrocytes. Shows toxicity against the brine shrimp A.nauplii. Induces reversible paw edema and hypernociceptivity in rats. The sequence is that of Lectin from Dioclea lasiophylla.